The primary structure comprises 538 residues: Chaperonin GroEL (538 aa).

Residues 30–33, 87–91, G415, 479–481, and D495 each bind ATP; these read TLGP, DGTTT, and DAA.

Belongs to the chaperonin (HSP60) family. Forms a cylinder of 14 subunits composed of two heptameric rings stacked back-to-back. Interacts with the co-chaperonin GroES.

Its subcellular location is the cytoplasm. The enzyme catalyses ATP + H2O + a folded polypeptide = ADP + phosphate + an unfolded polypeptide.. Functionally, together with its co-chaperonin GroES, plays an essential role in assisting protein folding. The GroEL-GroES system forms a nano-cage that allows encapsulation of the non-native substrate proteins and provides a physical environment optimized to promote and accelerate protein folding. This is Chaperonin GroEL from Dictyoglomus turgidum (strain DSM 6724 / Z-1310).